The following is a 159-amino-acid chain: Eukaryotic translation initiation factor 5A (159 aa).

Hypusine is present on lysine 51.

Belongs to the eIF-5A family. Lys-51 undergoes hypusination, a unique post-translational modification that consists in the addition of a butylamino group from spermidine to lysine side chain, leading to the formation of the unusual amino acid hypusine. eIF-5As are the only known proteins to undergo this modification, which is essential for their function.

The protein resides in the cytoplasm. Functionally, translation factor that promotes translation elongation and termination, particularly upon ribosome stalling at specific amino acid sequence contexts. Binds between the exit (E) and peptidyl (P) site of the ribosome and promotes rescue of stalled ribosome: specifically required for efficient translation of polyproline-containing peptides as well as other motifs that stall the ribosome. Acts as a ribosome quality control (RQC) cofactor by joining the RQC complex to facilitate peptidyl transfer during CAT tailing step. Functions as a regulator of autophagy. In Drosophila melanogaster (Fruit fly), this protein is Eukaryotic translation initiation factor 5A.